The primary structure comprises 148 residues: Large ribosomal subunit protein bL9 (148 aa).

It belongs to the bacterial ribosomal protein bL9 family.

Binds to the 23S rRNA. The polypeptide is Large ribosomal subunit protein bL9 (Frankia alni (strain DSM 45986 / CECT 9034 / ACN14a)).